Here is a 602-residue protein sequence, read N- to C-terminus: Elongation factor 4 (602 aa).

The 183-residue stretch at 6 to 188 (DHIRNFSIVA…AIVTQLPAPK (183 aa)) folds into the tr-type G domain. GTP contacts are provided by residues 18–23 (DHGKST) and 135–138 (NKID).

It belongs to the TRAFAC class translation factor GTPase superfamily. Classic translation factor GTPase family. LepA subfamily.

The protein localises to the cell inner membrane. It carries out the reaction GTP + H2O = GDP + phosphate + H(+). Required for accurate and efficient protein synthesis under certain stress conditions. May act as a fidelity factor of the translation reaction, by catalyzing a one-codon backward translocation of tRNAs on improperly translocated ribosomes. Back-translocation proceeds from a post-translocation (POST) complex to a pre-translocation (PRE) complex, thus giving elongation factor G a second chance to translocate the tRNAs correctly. Binds to ribosomes in a GTP-dependent manner. This Brucella anthropi (strain ATCC 49188 / DSM 6882 / CCUG 24695 / JCM 21032 / LMG 3331 / NBRC 15819 / NCTC 12168 / Alc 37) (Ochrobactrum anthropi) protein is Elongation factor 4.